The primary structure comprises 396 residues: NAD(P)H oxidoreductase RTN4IP1, mitochondrial (396 aa).

Residues 1–40 (MEFLKTCVLRRNACTAVCFWRSKVVQKPSVRRISTTSPRS) constitute a mitochondrion transit peptide. In terms of domain architecture, Enoyl reductase (ER) spans 52-393 (GKNEVLRFTQ…RGHARGKTVI (342 aa)). 12 residues coordinate NADPH: serine 214, glycine 216, valine 217, serine 237, tyrosine 255, asparagine 276, leucine 300, alanine 341, phenylalanine 343, histidine 386, alanine 387, and arginine 388.

It belongs to the zinc-containing alcohol dehydrogenase family. Quinone oxidoreductase subfamily. In terms of assembly, interacts with RTN4, UQCRC1 and UQCRC2. Widely expressed in mitochondria-enriched tissues. Found in heart, muscle, kidney, liver, brain and placenta.

It is found in the mitochondrion matrix. Its subcellular location is the mitochondrion outer membrane. The enzyme catalyses a 3-demethylubiquinone + NADH + 2 H(+) = a 3-demethylubiquinol + NAD(+). It carries out the reaction a 3-demethylubiquinone + NADPH + 2 H(+) = a 3-demethylubiquinol + NADP(+). The catalysed reaction is 3-demethylubiquinone-10 + NADH + 2 H(+) = 3-demethylubiquinol-10 + NAD(+). It catalyses the reaction 3-demethylubiquinone-10 + NADPH + 2 H(+) = 3-demethylubiquinol-10 + NADP(+). Its pathway is cofactor biosynthesis; ubiquinone biosynthesis. Its function is as follows. NAD(P)H oxidoreductase involved in the ubiquinone biosynthetic pathway. Required for the O-methyltransferase activity of COQ3. Able to catalyze the oxidoreduction of 3-demethylubiquinone into 3-demethylubiquinol in vitro. However, it is unclear if 3-demethylubiquinone constitutes a substrate in vivo. May also play a role in the regulation of retinal ganglion cell (RGC) neurite outgrowth, and hence in the development of the inner retina and optic nerve. Appears to be a potent inhibitor of regeneration following spinal cord injury. This chain is NAD(P)H oxidoreductase RTN4IP1, mitochondrial, found in Homo sapiens (Human).